Here is a 193-residue protein sequence, read N- to C-terminus: MKIGLYFGTYNPIHVGHLIIANHMAEFADLDQIWMVVTPHNPLKKKSTLLDDQQRLQMVYLATEDYTKIKPSDIEFKLPQPSYTVITLEHLKEKYPNHEFSLIMGEDNLKTLHKWRNYEVILENHDIYVYPRISDEPENVELKSHPKIHVIDAPIVEISSTFIRNSIKEGKNIQPLLPPKVWEYIDHNNFYKK.

Belongs to the NadD family.

It carries out the reaction nicotinate beta-D-ribonucleotide + ATP + H(+) = deamido-NAD(+) + diphosphate. It participates in cofactor biosynthesis; NAD(+) biosynthesis; deamido-NAD(+) from nicotinate D-ribonucleotide: step 1/1. Catalyzes the reversible adenylation of nicotinate mononucleotide (NaMN) to nicotinic acid adenine dinucleotide (NaAD). This is Probable nicotinate-nucleotide adenylyltransferase from Flavobacterium johnsoniae (strain ATCC 17061 / DSM 2064 / JCM 8514 / BCRC 14874 / CCUG 350202 / NBRC 14942 / NCIMB 11054 / UW101) (Cytophaga johnsonae).